Consider the following 190-residue polypeptide: Protein LZIC (190 aa).

Residues Ala-2–Ile-63 adopt a coiled-coil conformation.

Belongs to the CTNNBIP1 family. As to quaternary structure, does not interact with CTNNB1.

The polypeptide is Protein LZIC (Lzic) (Rattus norvegicus (Rat)).